A 207-amino-acid chain; its full sequence is MIGRLTGILAEKKAPHLLIDIGGVGYDVIAPMTTFYRLPALGEKAVLHTHFSVSETSQQLFGFSSQQDRELFRMLIKVNGVGPKLAVGIMSMESSDFAKCVLDGNLTALVKLPGVGKKTAERLLVDMRDRVKALDTTPSEHSPTGEGAGIVRVDPVINTNVIIADAESALIGLGYKPTEAAKAVSAAYNDTITTSEDLIRAALKGMI.

The domain I stretch occupies residues 1 to 64 (MIGRLTGILA…ETSQQLFGFS (64 aa)). A domain II region spans residues 65 to 142 (SQQDRELFRM…ALDTTPSEHS (78 aa)). The flexible linker stretch occupies residues 143 to 157 (PTGEGAGIVRVDPVI). Residues 158–207 (NTNVIIADAESALIGLGYKPTEAAKAVSAAYNDTITTSEDLIRAALKGMI) are domain III.

This sequence belongs to the RuvA family. As to quaternary structure, homotetramer. Forms an RuvA(8)-RuvB(12)-Holliday junction (HJ) complex. HJ DNA is sandwiched between 2 RuvA tetramers; dsDNA enters through RuvA and exits via RuvB. An RuvB hexamer assembles on each DNA strand where it exits the tetramer. Each RuvB hexamer is contacted by two RuvA subunits (via domain III) on 2 adjacent RuvB subunits; this complex drives branch migration. In the full resolvosome a probable DNA-RuvA(4)-RuvB(12)-RuvC(2) complex forms which resolves the HJ.

Its subcellular location is the cytoplasm. In terms of biological role, the RuvA-RuvB-RuvC complex processes Holliday junction (HJ) DNA during genetic recombination and DNA repair, while the RuvA-RuvB complex plays an important role in the rescue of blocked DNA replication forks via replication fork reversal (RFR). RuvA specifically binds to HJ cruciform DNA, conferring on it an open structure. The RuvB hexamer acts as an ATP-dependent pump, pulling dsDNA into and through the RuvAB complex. HJ branch migration allows RuvC to scan DNA until it finds its consensus sequence, where it cleaves and resolves the cruciform DNA. In Saccharophagus degradans (strain 2-40 / ATCC 43961 / DSM 17024), this protein is Holliday junction branch migration complex subunit RuvA.